The following is a 433-amino-acid chain: C2H2 type master regulator of conidiophore development brlA (433 aa).

Disordered regions lie at residues 24–49 (SDCP…LYSQ), 240–269 (KSHT…ISGH), and 286–306 (MMQR…LRSN). Positions 30–49 (TSSFSPLDSPTPTPTSLYSQ) are enriched in low complexity. Residues 240–264 (KSHTPSTPHRSVSMGTPSGSDTPVS) show a composition bias toward polar residues. Over residues 288–302 (QRHRQPSRKPSKKQL) the composition is skewed to basic residues. 2 C2H2-type zinc fingers span residues 321 to 345 (FKCK…MKSH) and 351 to 376 (HVCW…TKTH). The segment at 391-423 (ETSQDFDPDFRGQLTPDGRPIYGSKLEDSMPDC) is disordered.

Its subcellular location is the nucleus. Functionally, brlA, abaA and wetA are pivotal regulators of conidiophore development and conidium maturation. They act individually and together to regulate their own expression and that of numerous other sporulation-specific genes. Binds promoters of target genes at brlA response elements (BREs) containing the conserved sequence 5'-(C/A)(A/G)AGGG(G/A)-3'. Regulates genes involved in conidiogenesis. This Penicillium digitatum (strain PHI26 / CECT 20796) (Green mold) protein is C2H2 type master regulator of conidiophore development brlA.